The sequence spans 361 residues: Chorismate synthase (361 aa).

NADP(+)-binding residues include Arg-48 and Arg-54. Residues Arg-125–Ser-127, Asn-238–Ala-239, Gly-278, Lys-293–Ser-297, and Arg-319 each bind FMN.

The protein belongs to the chorismate synthase family. As to quaternary structure, homotetramer. It depends on FMNH2 as a cofactor.

The enzyme catalyses 5-O-(1-carboxyvinyl)-3-phosphoshikimate = chorismate + phosphate. The protein operates within metabolic intermediate biosynthesis; chorismate biosynthesis; chorismate from D-erythrose 4-phosphate and phosphoenolpyruvate: step 7/7. Catalyzes the anti-1,4-elimination of the C-3 phosphate and the C-6 proR hydrogen from 5-enolpyruvylshikimate-3-phosphate (EPSP) to yield chorismate, which is the branch point compound that serves as the starting substrate for the three terminal pathways of aromatic amino acid biosynthesis. This reaction introduces a second double bond into the aromatic ring system. The polypeptide is Chorismate synthase (Shigella flexneri serotype 5b (strain 8401)).